Here is a 271-residue protein sequence, read N- to C-terminus: Elongation factor Ts (271 aa).

The tract at residues 76-79 (TDFV) is involved in Mg(2+) ion dislocation from EF-Tu.

Belongs to the EF-Ts family.

The protein resides in the cytoplasm. Associates with the EF-Tu.GDP complex and induces the exchange of GDP to GTP. It remains bound to the aminoacyl-tRNA.EF-Tu.GTP complex up to the GTP hydrolysis stage on the ribosome. This is Elongation factor Ts from Mycobacterium ulcerans (strain Agy99).